We begin with the raw amino-acid sequence, 128 residues long: MAAVGSLLGRLRQSTVKATGPALRRLHTSSWRADSSRASLTRVHRQAYARLYPVLLVKQDGSTIHIRYREPRRMLAMPIDLDTLSPEERRARLRKREAQLQSRKEYEQELSDDLHVERYRQFWTRTKK.

The N-terminal 33 residues, 1–33, are a transit peptide targeting the mitochondrion; the sequence is MAAVGSLLGRLRQSTVKATGPALRRLHTSSWRA. Ser-85 bears the Phosphoserine mark.

The protein belongs to the mitochondrion-specific ribosomal protein mL55 family. Component of the mitochondrial large ribosomal subunit (mt-LSU). Mature mammalian 55S mitochondrial ribosomes consist of a small (28S) and a large (39S) subunit. The 28S small subunit contains a 12S ribosomal RNA (12S mt-rRNA) and 30 different proteins. The 39S large subunit contains a 16S rRNA (16S mt-rRNA), a copy of mitochondrial valine transfer RNA (mt-tRNA(Val)), which plays an integral structural role, and 52 different proteins.

It localises to the mitochondrion. The chain is Large ribosomal subunit protein mL55 (MRPL55) from Homo sapiens (Human).